We begin with the raw amino-acid sequence, 1263 residues long: DNA topoisomerase 2 (1263 aa).

ATP-binding positions include N80, N109, 137-139, and 150-157; these read STN and GKNGFGAK. An interaction with DNA region spans residues 329 to 331; that stretch reads VKK. 362-364 contributes to the ATP binding site; sequence QTK. The region spanning 439 to 553 is the Toprim domain; it reads CTLILTEGDS…SLVKYEGFIQ (115 aa). Mg(2+)-binding residues include E445, D522, and D524. The Topo IIA-type catalytic domain occupies 737–1223; it reads VPNLMDGFKP…SPEEIWEEEL (487 aa). The active-site O-(5'-phospho-DNA)-tyrosine intermediate is Y828. Residues 977–1015 are disordered; the sequence is KKASKAVSSAKNTKTTTKAGSKTGSRTRKNPALAKKSQK. Over residues 981 to 1000 the composition is skewed to low complexity; the sequence is KAVSSAKNTKTTTKAGSKTG. Positions 1068 to 1077 are interaction with DNA; it reads KLVKPLNLTN. The segment at 1244 to 1263 is disordered; the sequence is LLNKKKGSTGKKSRKTSTQK. Basic residues predominate over residues 1247–1263; the sequence is KKKGSTGKKSRKTSTQK.

Belongs to the type II topoisomerase family. Mg(2+) is required as a cofactor. Requires Mn(2+) as cofactor. Ca(2+) serves as cofactor.

It catalyses the reaction ATP-dependent breakage, passage and rejoining of double-stranded DNA.. In terms of biological role, can introduce negative superhelical turns into double-stranded circular DNA. This is DNA topoisomerase 2 (TOP2) from Acanthamoeba polyphaga (Amoeba).